Here is a 186-residue protein sequence, read N- to C-terminus: Ribosome-recycling factor (186 aa).

Belongs to the RRF family.

It localises to the cytoplasm. Its function is as follows. Responsible for the release of ribosomes from messenger RNA at the termination of protein biosynthesis. May increase the efficiency of translation by recycling ribosomes from one round of translation to another. This chain is Ribosome-recycling factor, found in Bacteroides thetaiotaomicron (strain ATCC 29148 / DSM 2079 / JCM 5827 / CCUG 10774 / NCTC 10582 / VPI-5482 / E50).